The sequence spans 207 residues: Outer-membrane lipoprotein LolB (207 aa).

Residues Met1–Ala21 form the signal peptide. The N-palmitoyl cysteine moiety is linked to residue Cys22. Cys22 carries S-diacylglycerol cysteine lipidation.

It belongs to the LolB family. As to quaternary structure, monomer.

Its subcellular location is the cell outer membrane. Plays a critical role in the incorporation of lipoproteins in the outer membrane after they are released by the LolA protein. In Yersinia pseudotuberculosis serotype O:3 (strain YPIII), this protein is Outer-membrane lipoprotein LolB.